Consider the following 174-residue polypeptide: Ferredoxin-thioredoxin reductase, variable chain, chloroplastic (174 aa).

A chloroplast-targeting transit peptide spans 1–62; that stretch reads MTTGVAVMSS…RTRARLAICC (62 aa). Low complexity predominate over residues 69–81; that stretch reads DSSTGFDSSSSSP. The interval 69 to 89 is disordered; the sequence is DSSTGFDSSSSSPPEEDEELK. Phosphoserine occurs at positions 70 and 71.

This sequence belongs to the ferredoxin thioredoxin reductase alpha subunit family. In terms of assembly, heterodimer of subunit A (variable subunit) and subunit B (catalytic subunit). Heterodimeric FTR forms a complex with ferredoxin and thioredoxin.

It is found in the plastid. The protein resides in the chloroplast. In terms of biological role, variable subunit of the ferredoxin-thioredoxin reductase (FTR), which catalyzes the two-electron reduction of thioredoxins by the electrons provided by reduced ferredoxin. This chain is Ferredoxin-thioredoxin reductase, variable chain, chloroplastic (FTRV), found in Spinacia oleracea (Spinach).